Consider the following 642-residue polypeptide: 1-deoxy-D-xylulose-5-phosphate synthase (642 aa).

Residues His-73 and 114–116 (SHA) contribute to the thiamine diphosphate site. A Mg(2+)-binding site is contributed by Asp-145. Thiamine diphosphate contacts are provided by residues 146–147 (GA), Asn-175, Phe-286, and Glu-367. Residue Asn-175 coordinates Mg(2+).

This sequence belongs to the transketolase family. DXPS subfamily. Homodimer. The cofactor is Mg(2+). Requires thiamine diphosphate as cofactor.

The catalysed reaction is D-glyceraldehyde 3-phosphate + pyruvate + H(+) = 1-deoxy-D-xylulose 5-phosphate + CO2. Its pathway is metabolic intermediate biosynthesis; 1-deoxy-D-xylulose 5-phosphate biosynthesis; 1-deoxy-D-xylulose 5-phosphate from D-glyceraldehyde 3-phosphate and pyruvate: step 1/1. Catalyzes the acyloin condensation reaction between C atoms 2 and 3 of pyruvate and glyceraldehyde 3-phosphate to yield 1-deoxy-D-xylulose-5-phosphate (DXP). The protein is 1-deoxy-D-xylulose-5-phosphate synthase of Saccharopolyspora erythraea (strain ATCC 11635 / DSM 40517 / JCM 4748 / NBRC 13426 / NCIMB 8594 / NRRL 2338).